We begin with the raw amino-acid sequence, 246 residues long: Protein YIPF4 (246 aa).

The Cytoplasmic portion of the chain corresponds to 1-115 (MQPPGPPPAY…FNRQVVRDNP (115 aa)). A helical transmembrane segment spans residues 116-136 (DFWGPLAVVLFFSMISLYGQF). Topologically, residues 137–140 (RVVS) are lumenal. A helical membrane pass occupies residues 141–161 (WIITIWIFGSLTIFLLARVLG). Topologically, residues 162–168 (GEVAYGQ) are cytoplasmic. The helical transmembrane segment at 169–189 (VLGVIGYSLLPLIVIAPILLV) threads the bilayer. At 190–197 (VGSFEMVS) the chain is on the lumenal side. Residues 198–218 (TLIKLFGVFWAAYSAASLLVG) traverse the membrane as a helical segment. At 219-225 (EEFKTKK) the chain is on the cytoplasmic side. A helical membrane pass occupies residues 226–246 (PLLIYPIFLLYIYFLSLYTGV).

Belongs to the YIP1 family. In terms of assembly, interacts with YIPF3 and YIPF5.

Its subcellular location is the golgi apparatus. It localises to the cis-Golgi network membrane. In terms of biological role, involved in the maintenance of the Golgi structure. The sequence is that of Protein YIPF4 (Yipf4) from Mus musculus (Mouse).